Reading from the N-terminus, the 557-residue chain is Potassium-transporting ATPase potassium-binding subunit (557 aa).

12 helical membrane-spanning segments follow: residues 5-25, 63-83, 132-152, 170-190, 253-273, 283-303, 329-349, 356-376, 379-399, 416-436, 484-504, and 526-546; these read GFLLIATFLLVLMVLARPLGS, LSAILGLNILGLAVLFFMLLG, GLTVQNFLSAASGIAVIFALI, LLRITLWVLTPVALLIALFFI, FVQMLAIFLIPTALCFAFGEV, LLWAMSVIFVICVGVVMWAEV, VLVSSLFAVVTTAASCGAVIA, ALGGMVPMWLMQIGEVVFGGV, GLYGMMLFVLLAVFIAGLMIG, LTALAILVTPTLVLMGAALAM, LLALCMFVGRFGVIIPVMAIA, and LFVGLLIGTVLLVGALTFIPA.

The protein belongs to the KdpA family. In terms of assembly, the system is composed of three essential subunits: KdpA, KdpB and KdpC.

Its subcellular location is the cell inner membrane. Functionally, part of the high-affinity ATP-driven potassium transport (or Kdp) system, which catalyzes the hydrolysis of ATP coupled with the electrogenic transport of potassium into the cytoplasm. This subunit binds the periplasmic potassium ions and delivers the ions to the membrane domain of KdpB through an intramembrane tunnel. The polypeptide is Potassium-transporting ATPase potassium-binding subunit (Escherichia coli O127:H6 (strain E2348/69 / EPEC)).